The chain runs to 420 residues: UDP-N-acetylglucosamine 1-carboxyvinyltransferase (420 aa).

22–23 contributes to the phosphoenolpyruvate binding site; it reads KN. Arginine 92 contributes to the UDP-N-acetyl-alpha-D-glucosamine binding site. Cysteine 116 serves as the catalytic Proton donor. Cysteine 116 carries the 2-(S-cysteinyl)pyruvic acid O-phosphothioketal modification. UDP-N-acetyl-alpha-D-glucosamine contacts are provided by residues 121-125, aspartate 304, and isoleucine 326; that span reads RPVDQ.

The protein belongs to the EPSP synthase family. MurA subfamily.

It is found in the cytoplasm. The catalysed reaction is phosphoenolpyruvate + UDP-N-acetyl-alpha-D-glucosamine = UDP-N-acetyl-3-O-(1-carboxyvinyl)-alpha-D-glucosamine + phosphate. Its pathway is cell wall biogenesis; peptidoglycan biosynthesis. In terms of biological role, cell wall formation. Adds enolpyruvyl to UDP-N-acetylglucosamine. In Paraburkholderia xenovorans (strain LB400), this protein is UDP-N-acetylglucosamine 1-carboxyvinyltransferase.